We begin with the raw amino-acid sequence, 637 residues long: Chaperone protein DnaK (637 aa).

At threonine 196 the chain carries Phosphothreonine; by autocatalysis. Disordered stretches follow at residues 484 to 528 (KATG…EVDT) and 598 to 637 (TEAGAPGAAGAAGAAGQGQSASSGKDDEVKNADFEVVDDK). Basic and acidic residues predominate over residues 501 to 528 (SETEIEKMKKDASSHADEDKKKKEEVDT). Positions 600–620 (AGAPGAAGAAGAAGQGQSASS) are enriched in low complexity. A compositionally biased stretch (basic and acidic residues) spans 621 to 637 (GKDDEVKNADFEVVDDK).

This sequence belongs to the heat shock protein 70 family.

In terms of biological role, acts as a chaperone. The sequence is that of Chaperone protein DnaK from Chloroherpeton thalassium (strain ATCC 35110 / GB-78).